A 262-amino-acid polypeptide reads, in one-letter code: Small ribosomal subunit protein eS1 (262 aa).

A compositionally biased stretch (basic residues) spans 1–18 (MAVGKNKRISKGKKGSKK). The segment at 1 to 20 (MAVGKNKRISKGKKGSKKKT) is disordered.

This sequence belongs to the eukaryotic ribosomal protein eS1 family. Component of the small ribosomal subunit. Mature ribosomes consist of a small (40S) and a large (60S) subunit. The 40S subunit contains about 33 different proteins and 1 molecule of RNA (18S). The 60S subunit contains about 49 different proteins and 3 molecules of RNA (25S, 5.8S and 5S).

Its subcellular location is the cytoplasm. In Oryza sativa subsp. japonica (Rice), this protein is Small ribosomal subunit protein eS1.